The primary structure comprises 979 residues: Receptor-type tyrosine-protein phosphatase-like N (979 aa).

The signal sequence occupies residues methionine 1–alanine 37. The interval isoleucine 38–proline 134 is RESP18 homology domain. Over isoleucine 38–arginine 575 the chain is Lumenal. A disulfide bridge connects residues cysteine 56 and cysteine 65. Positions methionine 113–serine 130 are enriched in basic and acidic residues. 3 disordered regions span residues methionine 113–leucine 173, glycine 289–proline 330, and methionine 392–valine 443. Polar residues predominate over residues threonine 145 to alanine 155. Basic and acidic residues predominate over residues arginine 303–lysine 322. Phosphoserine is present on residues serine 307 and serine 308. The span at serine 414 to leucine 424 shows a compositional bias: polar residues. The sufficient for dimerization of proICA512 stretch occupies residues serine 449–arginine 575. Asparagine 506 and asparagine 524 each carry an N-linked (GlcNAc...) asparagine glycan. A helical membrane pass occupies residues serine 576 to methionine 600. The interval arginine 601–glutamate 732 is sufficient for dimerization of proICA512. The Cytoplasmic segment spans residues arginine 601–glutamine 979. Residues arginine 644 to glutamate 680 are disordered. A compositionally biased stretch (low complexity) spans glutamine 648–serine 677. The Tyrosine-protein phosphatase domain occupies leucine 709–glutamate 969. A Glycyl lysine isopeptide (Lys-Gly) (interchain with G-Cter in SUMO) cross-link involves residue lysine 754.

This sequence belongs to the protein-tyrosine phosphatase family. Receptor class 8 subfamily. As to quaternary structure, homodimer; shown for the unprocessed protein (proICA512) in the endoplasmic reticulum and resolved during protein maturation as ICA512-TMF seems to be predominantly monomeric in secretory granules; however, ICA512-CCF interacts with ICA512-TMF disrupting the ICA512-TMF:SNTB2 complex. The isolated lumenal RESP18 homology domain has been shown to form disulfide-linked homooligomers. Interacts (via cytoplasmic domain) with phosphorylated SNTB2; this protects PTPRN against cleavage by CAPN1 to produce ICA512-CCF. Dephosphorylation of SNTB2 upon insulin stimulation disrupts the interaction and results in PTPRN cleavage. Interacts with SNX19. ICA512-CCF interacts with PIAS4; in the nucleus. Interacts with STAT5B (phosphorylated); down-regulated by ICA512-CCF sumoylation; ICA512-CCF prevents STAT5B dephosphorylation; ICA512-CCF mediates interaction of STAT5B with PIAS4. Interacts (via RESP18 homology domain) with insulin and proinsulin. Interacts with PTPRN2, PTPRA and PTPRE. In terms of processing, subject to proteolytic cleavage at multiple sites. Subject to cleavage on a pair of basic residues. On exocytosis of secretory granules in pancreatic beta-cells ICA512-TMF is transiently inserted in the plasma-membrane and cleaved by mu-type calpain CPN1 to yield ICA512-CCF. O-glycosylated. Post-translationally, N-glycosylated. In terms of processing, sumoylated at two sites including Lys-754. Sumoylation decreases interaction with STAT5. In terms of tissue distribution, detected in pituitary. Detected in brain (at protein level). Detected in brain. Weakly expressed in the colon, intestine, stomach and pancreas.

The protein resides in the membrane. It is found in the cytoplasmic vesicle. Its subcellular location is the secretory vesicle membrane. It localises to the perikaryon. The protein localises to the cell projection. The protein resides in the axon. It is found in the synapse. Its subcellular location is the cell membrane. It localises to the endosome. The protein localises to the nucleus. In terms of biological role, plays a role in vesicle-mediated secretory processes. Required for normal accumulation of secretory vesicles in hippocampus, pituitary and pancreatic islets. Required for the accumulation of normal levels of insulin-containing vesicles and preventing their degradation. Plays a role in insulin secretion in response to glucose stimuli. Required for normal accumulation of the neurotransmitters norepinephrine, dopamine and serotonin in the brain. In females, but not in males, required for normal accumulation and secretion of pituitary hormones, such as luteinizing hormone (LH) and follicle-stimulating hormone (FSH). Seems to lack intrinsic enzyme activity. Required to maintain normal levels of renin expression and renin release. May regulate catalytic active protein-tyrosine phosphatases such as PTPRA through dimerization. ICA512-TMF regulates dynamics and exocytosis of insulin secretory granules (SGs); binding of ICA512-TMF to SNTB2/beta-2-syntrophin is proposed to restrain SGs mobility and exocytosis by tethering them to the actin cytoskeleton depending on UTRN; the function is inhibited by cytoplasmic ICA512-CFF dimerizing with ICA512-TMF and displacing SNTB2. Its function is as follows. ICA512-CCF translocated to the nucleus promotes expression of insulin and other granule-related genes; the function implicates binding to and regulating activity of STAT5B probably by preventing its dephosphorylation and potentially by inducing its sumoylation by recruiting PIAS4. Enhances pancreatic beta-cell proliferation by converging with signaling by STAT5B and STAT3. ICA512-CCF located in the cytoplasm regulates dynamics and exocytosis of insulin secretory granules (SGs) by dimerizing with ICA512-TMF and displacing SNTB2 thus enhancing SGs mobility and exocytosis. The protein is Receptor-type tyrosine-protein phosphatase-like N (Ptprn) of Mus musculus (Mouse).